Reading from the N-terminus, the 249-residue chain is MGTPRIQHLLILLVLGASLLTSGLELYCQKGLSMTVEADPANMFNWTTEEVETCDKGALCQETILIIKAGTETAILATKGCIPEGEEAITIVQHSSPPGLIVTSYSNYCEDSFCNDKDSLSQFWEFSETTASTVSTTLHCPTCVALGTCFSAPSLPCPNGTTRCYQGKLEITGGGIESSVEVKGCTAMIGCRLMSGILAVGPMFVREACPHQLLTQPRKTENGATCLPIPVWGLQLLLPLLLPSFIHFS.

An N-terminal signal peptide occupies residues 1-25 (MGTPRIQHLLILLVLGASLLTSGLE). 2 N-linked (GlcNAc...) asparagine glycosylation sites follow: N45 and N159. In terms of domain architecture, UPAR/Ly6 spans 140 to 211 (CPTCVALGTC…PMFVREACPH (72 aa)). The GPI-anchor amidated asparagine moiety is linked to residue N222. Residues 223–249 (GATCLPIPVWGLQLLLPLLLPSFIHFS) constitute a propeptide, removed in mature form.

In terms of assembly, interacts with VAMP3. Interacts with LY6K. Interacts with DPEP3; co-localized on the cell surface of spermatocytes, spermatids, and testicular spermatozoa, co-localized only in cytoplasmic droplets of caput and corpus epididymal sperm. Interacts with ADAM5. In terms of processing, N-glycosylated; by high mannose and/or biantennary complex and/or certain types of hybrid oligosaccharides; possesses different oligosaccharides chains according to its subcellular localization in the testis. Post-translationally, sheds from membrane raft by ACE and released from the cell surface of epididymal sperm while it passes through the caput epididymis leading to disappearance of TEX101 on spermatozoa; is essential to produce fertile spermatozoa. As to expression, detected in testis and spermatogonia. Not detected in spermatocytes. Detected in blood leukocytes.

It localises to the cell membrane. Its subcellular location is the membrane raft. The protein localises to the cytoplasmic vesicle. The protein resides in the secretory vesicle. It is found in the acrosome. It localises to the secreted. Functionally, plays a role in fertilization by controlling binding of sperm to zona pellucida and migration of spermatozoa into the oviduct. May play a role in signal transduction and promote protein tyrosine phosphorylation. This Homo sapiens (Human) protein is Testis-expressed protein 101.